Reading from the N-terminus, the 736-residue chain is Exo-oligoalginate lyase (736 aa).

An N-terminal signal peptide occupies residues 1 to 23 (MLSVNTIKNTLLAAVLVSVPATA). Substrate is bound by residues Lys-136, 146–149 (QSLN), Lys-198, His-202, and 257–260 (YYQR). Tyr-258 acts as the Proton donor in catalysis. His-413 functions as the Proton acceptor in the catalytic mechanism. Zn(2+) contacts are provided by His-415 and Asp-433. Substrate is bound at residue Arg-438. His-464 provides a ligand contact to Zn(2+). Residue Glu-667 coordinates substrate.

Belongs to the polysaccharide lyase 17 family. In terms of assembly, homodimer. The cofactor is Zn(2+).

It localises to the periplasm. The enzyme catalyses Cleavage of 4-deoxy-alpha-L-erythro-hex-4-enopyranuronoside oligosaccharides into 4-deoxy-alpha-L-erythro-hex-4-enopyranuronate monosaccharides.. Catalyzes the depolymerization of alginate through an exolytic mode of action, via a beta-elimination mechanism. Preferentially acts on oligoalginates with degrees of polymerization higher than 2 to produce the alginate monomer, 4-deoxy-L-erythro-5-hexoseulose uronic acid. The chain is Exo-oligoalginate lyase from Saccharophagus degradans (strain 2-40 / ATCC 43961 / DSM 17024).